Here is a 224-residue protein sequence, read N- to C-terminus: Glycerol-3-phosphate acyltransferase (224 aa).

The next 6 helical transmembrane spans lie at 3 to 23, 54 to 74, 90 to 112, 127 to 147, 152 to 172, and 183 to 203; these read IFLS…IGSL, VFGY…VVFA, LYFY…PIYF, LISI…LLLF, VSLS…IPWM, and GFGQ…LIFW.

The protein belongs to the PlsY family. In terms of assembly, probably interacts with PlsX.

Its subcellular location is the cell membrane. It catalyses the reaction an acyl phosphate + sn-glycerol 3-phosphate = a 1-acyl-sn-glycero-3-phosphate + phosphate. The protein operates within lipid metabolism; phospholipid metabolism. Functionally, catalyzes the transfer of an acyl group from acyl-phosphate (acyl-PO(4)) to glycerol-3-phosphate (G3P) to form lysophosphatidic acid (LPA). This enzyme utilizes acyl-phosphate as fatty acyl donor, but not acyl-CoA or acyl-ACP. The protein is Glycerol-3-phosphate acyltransferase of Mycoplasmopsis synoviae (strain 53) (Mycoplasma synoviae).